Consider the following 72-residue polypeptide: Dermaseptin AA-3-4 (72 aa).

Residues 1–22 (MAFLKKSLFLVLFLGLVSLSIC) form the signal peptide. Residues 23–43 (DEEKRENEDEEEQEDDEQSEE) constitute a propeptide that is removed on maturation. The tract at residues 24-45 (EEKRENEDEEEQEDDEQSEEKR) is disordered. The span at 30–41 (EDEEEQEDDEQS) shows a compositional bias: acidic residues.

Belongs to the frog skin active peptide (FSAP) family. As to expression, expressed by the skin glands.

The protein resides in the secreted. Possesses a potent antimicrobial activity against Gram-positive and Gram-negative bacteria. Probably acts by disturbing membrane functions with its amphipathic structure. The chain is Dermaseptin AA-3-4 from Agalychnis annae (Blue-sided leaf frog).